We begin with the raw amino-acid sequence, 294 residues long: tRNA dimethylallyltransferase (294 aa).

An ATP-binding site is contributed by 10–17 (GPTAVGKT). 12–17 (TAVGKT) serves as a coordination point for substrate. Residues 35 to 38 (DSQQ) are interaction with substrate tRNA.

Belongs to the IPP transferase family. As to quaternary structure, monomer. It depends on Mg(2+) as a cofactor.

The catalysed reaction is adenosine(37) in tRNA + dimethylallyl diphosphate = N(6)-dimethylallyladenosine(37) in tRNA + diphosphate. Its function is as follows. Catalyzes the transfer of a dimethylallyl group onto the adenine at position 37 in tRNAs that read codons beginning with uridine, leading to the formation of N6-(dimethylallyl)adenosine (i(6)A). This Streptococcus pneumoniae serotype 4 (strain ATCC BAA-334 / TIGR4) protein is tRNA dimethylallyltransferase.